We begin with the raw amino-acid sequence, 395 residues long: Na(+)/H(+) antiporter NhaA (395 aa).

12 consecutive transmembrane segments (helical) span residues 18–38, 64–84, 100–120, 129–149, 160–180, 182–202, 205–225, 226–246, 266–286, 295–315, 333–353, and 368–388; these read AGGI…NSPL, LLMW…GLEV, IFPA…YWLV, GGWA…LVLL, FLLA…ALFF, HDLS…LILL, FKVS…VSVL, KSGV…PLKG, FLIL…GLGM, LGVT…FSYL, IFAV…LASL, and LGIL…LFVT.

It belongs to the NhaA Na(+)/H(+) (TC 2.A.33) antiporter family.

It localises to the cell inner membrane. It catalyses the reaction Na(+)(in) + 2 H(+)(out) = Na(+)(out) + 2 H(+)(in). In terms of biological role, na(+)/H(+) antiporter that extrudes sodium in exchange for external protons. The chain is Na(+)/H(+) antiporter NhaA from Histophilus somni (strain 129Pt) (Haemophilus somnus).